The primary structure comprises 487 residues: METVQLRNPPRRQLKKLDEDSLTKQPEEVFDVLEKLGEGSYGSVYKAIHKETGQIVAIKQVPVESDLQEIIKEISIMQQCDSPHVVKYYGSYFKNTDLWIVMEYCGAGSVSDIIRLRNKTLTEDEIATILQSTLKGLEYLHFMRKIHRDIKAGNILLNTEGHAKLADFGVAGQLTDTMAKRNTVIGTPFWMAPEVIQEIGYNCVADIWSLGITAIEMAEGKPPYADIHPMRAIFMIPTNPPPTFRKPELWSDNFTDFVKQCLVKSPEQRATATQLLQHPFVRSAKGVSILRDLINEAMDVKLKRQESQQREVDQDDEENSEEDEMDSGTMVRAVGDEMGTVRVASTMTDGANTMIEHDDTLPSQLGTMVINAEDEEEEGTMKRRDETMQPAKPSFLEYFEQKEKENQINSFGKSVPGPLKNSSDWKIPQDGDYEFLKSWTVEDLQKRLLALDPMMEQEIEEIRQKYQSKRQPILDAIEAKKRRQQNF.

Residue Met1 is modified to N-acetylmethionine. Thr3 bears the Phosphothreonine mark. In terms of domain architecture, Protein kinase spans 30–281; the sequence is FDVLEKLGEG…ATQLLQHPFV (252 aa). Residues 36 to 44 and Lys59 contribute to the ATP site; that span reads LGEGSYGSV. Asp149 serves as the catalytic Proton acceptor. Thr183 bears the Phosphothreonine; by autocatalysis mark. Residue Ser265 is modified to Phosphoserine. Residues 290-310 adopt a coiled-coil conformation; it reads LRDLINEAMDVKLKRQESQQR. The segment covering 303 to 312 has biased composition (basic and acidic residues); that stretch reads KRQESQQREV. The disordered stretch occupies residues 303 to 332; it reads KRQESQQREVDQDDEENSEEDEMDSGTMVR. The span at 313–326 shows a compositional bias: acidic residues; that stretch reads DQDDEENSEEDEMD. At Ser320 the chain carries Phosphoserine. Residues Thr340 and Thr367 each carry the phosphothreonine modification. A Phosphothreonine; by PKB/AKT1 modification is found at Thr387. Phosphoserine is present on residues Ser410 and Ser414. Position 433 is a phosphotyrosine (Tyr433). The 48-residue stretch at 433 to 480 folds into the SARAH domain; it reads YEFLKSWTVEDLQKRLLALDPMMEQEIEEIRQKYQSKRQPILDAIEAK.

Belongs to the protein kinase superfamily. STE Ser/Thr protein kinase family. STE20 subfamily. In terms of assembly, homodimer; mediated via the coiled-coil region. Interacts with NORE1, which inhibits autoactivation. Interacts with and stabilizes SAV1. Interacts with RASSF1. Interacts with FOXO3. Interacts with RASSF2 (via SARAH domain). Interacts with AR, PKB/AKT1, TNNI3 and SIRT1. Interacts with DLG5 (via PDZ domain 3). Interacts with MARK3 in the presence of DLG5. Interacts with SCRIB in the presence of DLG5. The cofactor is Mg(2+). Autophosphorylated on serine and threonine residues. Phosphorylation at Thr-387 by PKB/AKT1, leads to inhibition of its: kinase activity, nuclear translocation and autophosphorylation at Thr-183. It also diminishes its cleavage by caspases and its ability to phosphorylate FOXO3. Post-translationally, proteolytically cleaved by caspase-3 during apoptosis at Asp-326 and Asp-349 resulting in a 37 kDa or a 39 kDa subunit respectively. The 39 kDa subunit is further cleaved into the 37 kDa form. Proteolytic cleavage results in kinase activation and nuclear translocation of the truncated form (MST1/N). It is less likely that cleavage at Asp-349 is a prerequisite for activation as this site is not conserved in the murine ortholog. Expressed in prostate cancer and levels increase from the normal to the malignant state (at protein level). Ubiquitously expressed.

The protein resides in the cytoplasm. Its subcellular location is the nucleus. It catalyses the reaction L-seryl-[protein] + ATP = O-phospho-L-seryl-[protein] + ADP + H(+). The catalysed reaction is L-threonyl-[protein] + ATP = O-phospho-L-threonyl-[protein] + ADP + H(+). With respect to regulation, inhibited by the C-terminal non-catalytic region. Activated by caspase-cleavage. Full activation also requires homodimerization and autophosphorylation of Thr-183. Activated by RASSF1 which acts by preventing its dephosphorylation. Its function is as follows. Stress-activated, pro-apoptotic kinase which, following caspase-cleavage, enters the nucleus and induces chromatin condensation followed by internucleosomal DNA fragmentation. Key component of the Hippo signaling pathway which plays a pivotal role in organ size control and tumor suppression by restricting proliferation and promoting apoptosis. The core of this pathway is composed of a kinase cascade wherein STK3/MST2 and STK4/MST1, in complex with its regulatory protein SAV1, phosphorylates and activates LATS1/2 in complex with its regulatory protein MOB1, which in turn phosphorylates and inactivates YAP1 oncoprotein and WWTR1/TAZ. Phosphorylation of YAP1 by LATS2 inhibits its translocation into the nucleus to regulate cellular genes important for cell proliferation, cell death, and cell migration. STK3/MST2 and STK4/MST1 are required to repress proliferation of mature hepatocytes, to prevent activation of facultative adult liver stem cells (oval cells), and to inhibit tumor formation. Phosphorylates 'Ser-14' of histone H2B (H2BS14ph) during apoptosis. Phosphorylates FOXO3 upon oxidative stress, which results in its nuclear translocation and cell death initiation. Phosphorylates MOBKL1A, MOBKL1B and RASSF2. Phosphorylates TNNI3 (cardiac Tn-I) and alters its binding affinity to TNNC1 (cardiac Tn-C) and TNNT2 (cardiac Tn-T). Phosphorylates FOXO1 on 'Ser-212' and regulates its activation and stimulates transcription of PMAIP1 in a FOXO1-dependent manner. Phosphorylates SIRT1 and inhibits SIRT1-mediated p53/TP53 deacetylation, thereby promoting p53/TP53 dependent transcription and apoptosis upon DNA damage. Acts as an inhibitor of PKB/AKT1. Phosphorylates AR on 'Ser-650' and suppresses its activity by intersecting with PKB/AKT1 signaling and antagonizing formation of AR-chromatin complexes. The chain is Serine/threonine-protein kinase 4 from Homo sapiens (Human).